The chain runs to 908 residues: MGDLKSGFEEVDGVRLGYLIIKGKQMFALSQVFTDLLKNIPRTTVHKRMDHLKVKKHHCDLEELRKLKAINSIAFHAAKCTLISREDVEALYTSCKTERVLKTKRRRVGRALATKAPPPERAAAASPRPGFWKDKHQLWRGLSGAARPLPISAQSQRPGAAAARPAAHLPQIFSKYPGSHYPEIVRSPCKPPLNYETAPLQGNYVAFPSDPAYFRSLLCSKHPAAAAAAAAAAAAAAAAAAAAAYYQVSAAGPQPKAAAGAGGPGSLSYRCKRKRGGAKDCLLAPHAGARRLLLLPRSYKAKAAAAAAAAAAAAAAAAGATCLERFHLVNGFCPPPHHHHHHHHHHHHHHHRAQPPQQSHHPPHHHRPQPHLGSFPESCSSDSESSSYSDHAANDSDFGSSLSSSSNSVSSEEEEEEGEEEEEEEEEEGGSGASDSSEVSSEEEDSSTESDSSSGSSQVSVQSIRFRRTSFCKPPSVQAQANFLYHLASAAAATKPAAFEDAGRLPDLKSSVKAESPAEWNLQSWAPKASPVYCPASLGSCFAEIRNDRVSEITFPHSEISNAVKRTDLTINCLAEGASSPSPKTNNAFPQQRILREARKCLQTTPTTHCADNNTIAARFLNNDSSGAEANSEKYSKILHCPEFATDLPSSQTDPEVNAAGAAATKAENPCTDTGDKTLPFLHNIKIKVEDSSANEEYEPHLFTNKLKCECNDTKGEFYSVTESKEEDALLTTAKEGFACPEKETPSLNPLAQSQGLSCTLGSPKPEDGEYKFGARVRKNYRTLVLGKRPVLQTPPVKPNLKSARSPRPTGKTETNEGTLDDFTVINRRKKVASNVASAVKRPFHFMANFPCPPSLIIGRDGDLWPAYSLNTTKDSQTPHKAHPIWKWQLGGSAIPLPPSHKFRKFNS.

Over residues 337–353 (HHHHHHHHHHHHHHHRA) the composition is skewed to basic residues. The segment at 337 to 461 (HHHHHHHHHH…SSSGSSQVSV (125 aa)) is disordered. Low complexity-rich tracts occupy residues 370-389 (PHLG…SSYS) and 396-410 (SDFG…NSVS). A compositionally biased stretch (acidic residues) spans 411–429 (SEEEEEEGEEEEEEEEEEG). Residues 449–461 (ESDSSSGSSQVSV) are compositionally biased toward low complexity. Lys-688 participates in a covalent cross-link: Glycyl lysine isopeptide (Lys-Gly) (interchain with G-Cter in SUMO2). 2 disordered regions span residues 744–763 (ETPS…TLGS) and 792–818 (LQTP…TNEG). A compositionally biased stretch (polar residues) spans 746–761 (PSLNPLAQSQGLSCTL).

It belongs to the DACH/dachshund family.

This is SKI/DACH domain-containing protein 1 (SKIDA1) from Homo sapiens (Human).